We begin with the raw amino-acid sequence, 264 residues long: Apolipoprotein A-I (264 aa).

Positions 1–18 (MKAVLLVVAALFLAGSQA) are cleaved as a signal peptide. 2 consecutive repeat copies span residues 67-88 (LRLSDNWDTLSTILTKLQADFG) and 89-110 (LATQEFWDTLEKETEWLKQIVS). A 10 X approximate tandem repeats region spans residues 67–264 (LRLSDNWDTL…DQASKQLAAQ (198 aa)). One copy of the 3; half-length repeat lies at 111-121 (EDLQDVKHKVQ). 5 consecutive repeat copies span residues 122 to 143 (PYLENFQKKVQEEVEHYREKVR), 144 to 165 (PLGIELRDGARQKLQELQEKLT), 166 to 187 (PLGEDLRDRTREHVDVLRTQLA), 188 to 207 (PFSEEMRQRLAKRLEELKDS), and 208 to 229 (ATLADYHAKASEHLKMLGEKAK). Met193 carries the post-translational modification Methionine sulfoxide. The stretch at 230–240 (PALEDLRQGLL) is one 9; half-length repeat. Repeat 10 spans residues 241–264 (PVLENLKASILSSIDQASKQLAAQ).

It belongs to the apolipoprotein A1/A4/E family. Homodimer. Interacts with APOA1BP and CLU. Component of a sperm activating protein complex (SPAP), consisting of APOA1, an immunoglobulin heavy chain, an immunoglobulin light chain and albumin. Interacts with NDRG1. Interacts with SCGB3A2. Interacts with NAXE and YJEFN3. Glycosylated. In terms of processing, palmitoylated. Post-translationally, phosphorylation sites are present in the extracellular medium.

The protein localises to the secreted. Participates in the reverse transport of cholesterol from tissues to the liver for excretion by promoting cholesterol efflux from tissues and by acting as a cofactor for the lecithin cholesterol acyltransferase (LCAT). As part of the SPAP complex, activates spermatozoa motility. The chain is Apolipoprotein A-I (APOA1) from Cavia porcellus (Guinea pig).